The sequence spans 206 residues: Large ribosomal subunit protein uL3 (206 aa).

Positions 116–149 (GFQGAIKRHNQSRGPMSHGSRYHRRPGSMGPVAP) are disordered.

It belongs to the universal ribosomal protein uL3 family. In terms of assembly, part of the 50S ribosomal subunit. Forms a cluster with proteins L14 and L19.

Its function is as follows. One of the primary rRNA binding proteins, it binds directly near the 3'-end of the 23S rRNA, where it nucleates assembly of the 50S subunit. This is Large ribosomal subunit protein uL3 from Shouchella clausii (strain KSM-K16) (Alkalihalobacillus clausii).